A 275-amino-acid polypeptide reads, in one-letter code: DNA repair protein RecO (275 aa).

The interval 1–38 (MTDEADADPQPFAAPPATGAPAADKPARKPRRAAPRTS) is disordered. Residues 8-24 (DPQPFAAPPATGAPAAD) are compositionally biased toward low complexity.

Belongs to the RecO family.

Involved in DNA repair and RecF pathway recombination. The polypeptide is DNA repair protein RecO (Burkholderia pseudomallei (strain 1710b)).